The following is a 341-amino-acid chain: Putative methyltransferase YGR283C (341 aa).

The protein belongs to the class IV-like SAM-binding methyltransferase superfamily.

It localises to the nucleus. The protein resides in the nucleolus. The protein is Putative methyltransferase YGR283C of Saccharomyces cerevisiae (strain ATCC 204508 / S288c) (Baker's yeast).